The following is an 88-amino-acid chain: Meiosis-expressed gene 1 protein (88 aa).

Belongs to the MEIG1 family. Interacts with PACRG. Interacts with MORN3. In terms of tissue distribution, expressed in the testes (at protein level). Expressed in the ovary. Several isoforms have been identified differing in their 5'-untranslated exons. These isoforms show different tissue expression. Some are expressed in various tissues, including lung, liver, brain, testis, oviduct and oocytes. Some are testis-specific.

Essential for spermiogenesis. This is Meiosis-expressed gene 1 protein from Mus musculus (Mouse).